The sequence spans 1134 residues: TBC1 domain family member 8 (1134 aa).

GRAM domains lie at 145–212 and 285–353; these read VKFE…ERTS and EFFR…EKME. Positions 433 to 466 are disordered; it reads ASQSSEEREEKRPLPHPEPLTAVFQQSGSQSPDS. The span at 437–447 shows a compositional bias: basic and acidic residues; sequence SEEREEKRPLP. Residues 455–466 are compositionally biased toward polar residues; sequence VFQQSGSQSPDS. Residues 504–691 form the Rab-GAP TBC domain; sequence GIPESLRGRL…HVVDCFFYDG (188 aa). The disordered stretch occupies residues 1034 to 1070; the sequence is SSSGSCSQECEEPQASAPPEQDSVFAEAGKSPQAFPE.

Functionally, may act as a GTPase-activating protein for Rab family protein(s). In Mus musculus (Mouse), this protein is TBC1 domain family member 8 (Tbc1d8).